A 393-amino-acid polypeptide reads, in one-letter code: S-adenosylmethionine synthase (393 aa).

Glutamate 9 lines the Mg(2+) pocket. Histidine 15 lines the ATP pocket. Glutamate 43 serves as a coordination point for K(+). 2 residues coordinate L-methionine: glutamate 56 and glutamine 99. ATP is bound by residues 167-169 (HGK), 235-238 (SGRF), aspartate 246, 252-253 (RK), alanine 269, lysine 273, and lysine 277. Residue aspartate 246 coordinates L-methionine. Residue lysine 277 participates in L-methionine binding.

This sequence belongs to the AdoMet synthase family. In terms of assembly, homotetramer. It depends on Mn(2+) as a cofactor. Mg(2+) is required as a cofactor. Co(2+) serves as cofactor. The cofactor is K(+). In terms of tissue distribution, root.

The protein resides in the cytoplasm. It catalyses the reaction L-methionine + ATP + H2O = S-adenosyl-L-methionine + phosphate + diphosphate. It participates in amino-acid biosynthesis; S-adenosyl-L-methionine biosynthesis; S-adenosyl-L-methionine from L-methionine: step 1/1. Catalyzes the formation of S-adenosylmethionine from methionine and ATP. The reaction comprises two steps that are both catalyzed by the same enzyme: formation of S-adenosylmethionine (AdoMet) and triphosphate, and subsequent hydrolysis of the triphosphate. The sequence is that of S-adenosylmethionine synthase (METK) from Pinus banksiana (Jack pine).